Here is a 250-residue protein sequence, read N- to C-terminus: ATP synthase subunit a (250 aa).

Helical transmembrane passes span 29–49 (ASLF…FATS), 84–104 (FFPL…LGMF), 114–134 (IIVT…YGFY), 143–163 (VFVP…IEII), 193–213 (FVAS…LPLI), and 216–236 (VALT…FAVL).

It belongs to the ATPase A chain family. In terms of assembly, F-type ATPases have 2 components, CF(1) - the catalytic core - and CF(0) - the membrane proton channel. CF(1) has five subunits: alpha(3), beta(3), gamma(1), delta(1), epsilon(1). CF(0) has three main subunits: a(1), b(2) and c(9-12). The alpha and beta chains form an alternating ring which encloses part of the gamma chain. CF(1) is attached to CF(0) by a central stalk formed by the gamma and epsilon chains, while a peripheral stalk is formed by the delta and b chains.

The protein localises to the cell inner membrane. In terms of biological role, key component of the proton channel; it plays a direct role in the translocation of protons across the membrane. The chain is ATP synthase subunit a from Rhizobium etli (strain CIAT 652).